An 80-amino-acid polypeptide reads, in one-letter code: Large ribosomal subunit protein bL28 (80 aa).

Residues 1-23 (MARVCQITGKKTRTGNNVSHANN) form a disordered region.

It belongs to the bacterial ribosomal protein bL28 family.

This is Large ribosomal subunit protein bL28 from Cytophaga hutchinsonii (strain ATCC 33406 / DSM 1761 / CIP 103989 / NBRC 15051 / NCIMB 9469 / D465).